Consider the following 166-residue polypeptide: Endoribonuclease YbeY (166 aa).

Residues His132, His136, and His142 each coordinate Zn(2+).

It belongs to the endoribonuclease YbeY family. Zn(2+) serves as cofactor.

It localises to the cytoplasm. In terms of biological role, single strand-specific metallo-endoribonuclease involved in late-stage 70S ribosome quality control and in maturation of the 3' terminus of the 16S rRNA. This Clostridium botulinum (strain Loch Maree / Type A3) protein is Endoribonuclease YbeY.